The following is a 385-amino-acid chain: 8-amino-7-oxononanoate synthase (385 aa).

Residue R21 coordinates substrate. A pyridoxal 5'-phosphate-binding site is contributed by 108 to 109 (GF). H133 lines the substrate pocket. 3 residues coordinate pyridoxal 5'-phosphate: S179, H207, and T233. Residue K236 is modified to N6-(pyridoxal phosphate)lysine. T352 is a binding site for substrate.

This sequence belongs to the class-II pyridoxal-phosphate-dependent aminotransferase family. BioF subfamily. In terms of assembly, homodimer. Requires pyridoxal 5'-phosphate as cofactor.

The catalysed reaction is 6-carboxyhexanoyl-[ACP] + L-alanine + H(+) = (8S)-8-amino-7-oxononanoate + holo-[ACP] + CO2. Its pathway is cofactor biosynthesis; biotin biosynthesis. Functionally, catalyzes the decarboxylative condensation of pimeloyl-[acyl-carrier protein] and L-alanine to produce 8-amino-7-oxononanoate (AON), [acyl-carrier protein], and carbon dioxide. The protein is 8-amino-7-oxononanoate synthase of Klebsiella pneumoniae (strain 342).